A 725-amino-acid polypeptide reads, in one-letter code: N-alpha-acetyltransferase 35, NatC auxiliary subunit (725 aa).

S187 carries the phosphoserine modification. A disordered region spans residues 548-573 (ERIMEEQQKGRSSKKTKKKKKVRPLS). A compositionally biased stretch (basic residues) spans 558-571 (RSSKKTKKKKKVRP).

The protein belongs to the MAK10 family. As to quaternary structure, component of the N-terminal acetyltransferase C (NatC) complex, which is composed of NAA35, NAA38 and NAA30.

The protein resides in the cytoplasm. Functionally, auxillary component of the N-terminal acetyltransferase C (NatC) complex which catalyzes acetylation of N-terminal methionine residues. N-terminal acetylation protects proteins from ubiquitination and degradation by the N-end rule pathway. Involved in regulation of apoptosis and proliferation of smooth muscle cells. The polypeptide is N-alpha-acetyltransferase 35, NatC auxiliary subunit (NAA35) (Macaca fascicularis (Crab-eating macaque)).